The sequence spans 253 residues: MICOS complex subunit mic25-b (253 aa).

A lipid anchor (N-myristoyl glycine) is attached at G2. The disordered stretch occupies residues 38-82; the sequence is KDQSTWAASGAASGSATVPSKVGSSASHPAAASKDGAHKPTAAGV. The span at 44–53 shows a compositional bias: low complexity; the sequence is AASGAASGSA. A coiled-coil region spans residues 87–116; sequence AEEDLYRRYEREQTLIQEELARLAKREKDA. Residues 206 to 248 enclose the CHCH domain; it reads DPVCMDLQSNILKCYAENKQERLNCSDLAKEYQKCVSAAQKNL. 2 consecutive short sequence motifs (cx9C motif) follow at residues 209-219 and 230-240; these read CMDLQSNILKC and CSDLAKEYQKC. Cystine bridges form between C209–C240 and C219–C230.

The protein belongs to the MICOS complex subunit Mic19 family. Metazoan Mic25 subfamily. In terms of assembly, component of the mitochondrial contact site and cristae organizing system (MICOS) complex (also known as MINOS or MitOS complex).

It is found in the mitochondrion inner membrane. In terms of biological role, component of the MICOS complex, a large protein complex of the mitochondrial inner membrane that plays crucial roles in the maintenance of crista junctions, inner membrane architecture, and formation of contact sites to the outer membrane. The polypeptide is MICOS complex subunit mic25-b (chchd6-b) (Xenopus laevis (African clawed frog)).